A 627-amino-acid polypeptide reads, in one-letter code: Lactose permease (627 aa).

The permease stretch occupies residues 1 to 460 (MKKKLVSRLS…AEIVDQLETQ (460 aa)). A run of 12 helical transmembrane segments spans residues 13–33 (AGAFGNDVFYATLSTYFIVFV), 46–66 (IFIITNLITAIRIGEVLLDPL), 84–104 (WVVGGGIISSLALLALFTDFG), 111–131 (PVVYLVIFGIVYLIMDIFYSF), 159–179 (VGSTIGANLVGVVITPIILFF), 193–213 (WFFFALIVAIVGILTSITVGL), 244–264 (LLWLAFAYWFYGLGINTLNAL), 281–301 (LLYTINTFVGLISASFFPSLA), 309–329 (LFYACIAVMLLGIGVFSVASG), 336–356 (VGAEFFFIPQPLAFLVVLMII), 392–412 (WFVSLIALTAGMTTGATASTI), and 419–439 (VFKLAMFALPAVMLLIAVSIF). The PTS EIIA type-1 domain occupies 493–597 (DPVFADKKLG…DDTVIVTVIN (105 aa)). H545 carries the phosphohistidine; by HPr modification.

This sequence in the N-terminal section; belongs to the sodium:galactoside symporter (TC 2.A.2) family.

The protein localises to the cell membrane. Responsible for transport of beta-galactosides into the cell, with the concomitant uptake of protons (symport system), and also for transport of homologous and heterologous exchange of beta-galactosides. The protein is Lactose permease (lacY) of Lactobacillus delbrueckii subsp. bulgaricus (strain ATCC 11842 / DSM 20081 / BCRC 10696 / JCM 1002 / NBRC 13953 / NCIMB 11778 / NCTC 12712 / WDCM 00102 / Lb 14).